The sequence spans 386 residues: Succinate--CoA ligase [ADP-forming] subunit beta (386 aa).

The 236-residue stretch at 9–244 (KHILSRFGVS…YDEEIKEEIE (236 aa)) folds into the ATP-grasp domain. ATP contacts are provided by residues K46, 53-55 (GRG), E99, C102, and E107. N199 and D213 together coordinate Mg(2+). Substrate contacts are provided by residues N264 and 320–322 (GIM).

It belongs to the succinate/malate CoA ligase beta subunit family. In terms of assembly, heterotetramer of two alpha and two beta subunits. Mg(2+) is required as a cofactor.

It carries out the reaction succinate + ATP + CoA = succinyl-CoA + ADP + phosphate. The enzyme catalyses GTP + succinate + CoA = succinyl-CoA + GDP + phosphate. It functions in the pathway carbohydrate metabolism; tricarboxylic acid cycle; succinate from succinyl-CoA (ligase route): step 1/1. Succinyl-CoA synthetase functions in the citric acid cycle (TCA), coupling the hydrolysis of succinyl-CoA to the synthesis of either ATP or GTP and thus represents the only step of substrate-level phosphorylation in the TCA. The beta subunit provides nucleotide specificity of the enzyme and binds the substrate succinate, while the binding sites for coenzyme A and phosphate are found in the alpha subunit. The chain is Succinate--CoA ligase [ADP-forming] subunit beta from Ehrlichia canis (strain Jake).